The sequence spans 396 residues: Flavohemoprotein (396 aa).

The Globin domain occupies 1-136 (MLDAQTIATV…LANVFINREA (136 aa)). His85 contacts heme b. Active-site charge relay system residues include Tyr95 and Glu135. A reductase region spans residues 147–396 (GGWEGTRDFR…YECFGPHKVL (250 aa)). The FAD-binding FR-type domain maps to 150–255 (EGTRDFRIVA…VAPAGDFFMA (106 aa)). Residues Tyr188 and 204 to 207 (RQYS) each bind FAD. 268 to 273 (GVGQTP) is an NADP(+) binding site. 389 to 392 (CFGP) is an FAD binding site.

Belongs to the globin family. Two-domain flavohemoproteins subfamily. This sequence in the C-terminal section; belongs to the flavoprotein pyridine nucleotide cytochrome reductase family. Heme b is required as a cofactor. The cofactor is FAD.

It catalyses the reaction 2 nitric oxide + NADPH + 2 O2 = 2 nitrate + NADP(+) + H(+). The catalysed reaction is 2 nitric oxide + NADH + 2 O2 = 2 nitrate + NAD(+) + H(+). Functionally, is involved in NO detoxification in an aerobic process, termed nitric oxide dioxygenase (NOD) reaction that utilizes O(2) and NAD(P)H to convert NO to nitrate, which protects the bacterium from various noxious nitrogen compounds. Therefore, plays a central role in the inducible response to nitrosative stress. This chain is Flavohemoprotein, found in Shigella flexneri.